The sequence spans 292 residues: MKTKIRKAVIPAAGLGVRLLPATKAIPKEMLPLVNKPTIQYIVEEAVKSGIEQILVIVSSKKTAILDHFDYDLILENALIQKNKLQEHKEIEDIANLAHIFFVRQKNQDGLGDAILFAESFVGNEDFAVLLGDDVVFSKEPALKQCLEAYYETNCQTIGVQEVDPCHVDKYGIITPEGDYKNKDLIKVLAMTEKPKPKDAKSNLAILGRYVLKPSIFKALRSVPYGVGGELQLTDGLNFCLKNENFYARKFTGTRFDVGTKSGFIKANLFTALNNKDISKKEVLELLNLVKA.

Belongs to the UDPGP type 2 family.

The enzyme catalyses alpha-D-glucose 1-phosphate + UTP + H(+) = UDP-alpha-D-glucose + diphosphate. In terms of biological role, may play a role in stationary phase survival. The chain is UTP--glucose-1-phosphate uridylyltransferase (galU) from Mycoplasma genitalium (strain ATCC 33530 / DSM 19775 / NCTC 10195 / G37) (Mycoplasmoides genitalium).